Consider the following 98-residue polypeptide: NADH-ubiquinone oxidoreductase chain 4L (98 aa).

3 helical membrane passes run 1–21 (MSLIHINVFLAFTTSLMGLLM), 29–49 (SLLCLEGMMLSLFIMATMMVL), and 61–81 (IILLVFAACEAALGLSLLVMI).

This sequence belongs to the complex I subunit 4L family. Core subunit of respiratory chain NADH dehydrogenase (Complex I) which is composed of 45 different subunits.

It is found in the mitochondrion inner membrane. It catalyses the reaction a ubiquinone + NADH + 5 H(+)(in) = a ubiquinol + NAD(+) + 4 H(+)(out). Its function is as follows. Core subunit of the mitochondrial membrane respiratory chain NADH dehydrogenase (Complex I) which catalyzes electron transfer from NADH through the respiratory chain, using ubiquinone as an electron acceptor. Part of the enzyme membrane arm which is embedded in the lipid bilayer and involved in proton translocation. This chain is NADH-ubiquinone oxidoreductase chain 4L (MT-ND4L), found in Ceratotherium simum (White rhinoceros).